We begin with the raw amino-acid sequence, 111 residues long: 2Fe-2S ferredoxin (111 aa).

Residues M1–N104 enclose the 2Fe-2S ferredoxin-type domain. The [2Fe-2S] cluster site is built by C42, C48, C51, and C87.

This sequence belongs to the adrenodoxin/putidaredoxin family. [2Fe-2S] cluster serves as cofactor.

Its function is as follows. Ferredoxin are iron-sulfur proteins that transfer electrons in a wide variety of metabolic reactions. This Buchnera aphidicola subsp. Acyrthosiphon pisum (strain APS) (Acyrthosiphon pisum symbiotic bacterium) protein is 2Fe-2S ferredoxin (fdx).